Reading from the N-terminus, the 1209-residue chain is Protein FAM83H (1209 aa).

The tract at residues methionine 1–proline 286 is DUF1669. Residues methionine 1–proline 286 are mediates interaction with CSNK1A1 and is required for FAM83H activity in keratin cytoskeleton organization. 6 positions are modified to phosphoserine: serine 512, serine 513, serine 515, serine 522, serine 639, and serine 660. 3 disordered regions span residues serine 512–glutamine 545, arginine 615–arginine 664, and lysine 735–glutamine 760. Residue threonine 749 is modified to Phosphothreonine. Phosphoserine occurs at positions 752, 778, 806, and 871. The tract at residues alanine 829–alanine 1056 is disordered. Threonine 873 is modified (phosphothreonine). 4 positions are modified to phosphoserine: serine 882, serine 893, serine 904, and serine 915. A compositionally biased stretch (polar residues) spans serine 915–tyrosine 942. Threonine 917 is subject to Phosphothreonine. Serine 926 is subject to Phosphoserine. A Phosphothreonine modification is found at threonine 928. A phosphoserine mark is found at serine 937, serine 948, serine 959, serine 970, serine 977, serine 1035, serine 1041, and serine 1057. Threonine 1072 is modified (phosphothreonine). Disordered regions lie at residues leucine 1076 to aspartate 1147 and glutamate 1174 to lysine 1193. Phosphoserine is present on residues serine 1080, serine 1098, and serine 1177.

It belongs to the FAM83 family. As to quaternary structure, directly interacts (via DUF1669) with casein kinase isoforms CSNK1A1, CSNK1A1L, CSNK1D and CSNK1E. Interaction with CSNK1A1 recruits CSNK1A1 to keratin filaments. Interacts with KRT18 and probably other keratins. As to expression, expressed in tooth follicle, eye, liver and kidney.

Its subcellular location is the cytoplasm. The protein localises to the cytoskeleton. In terms of biological role, may play a major role in the structural organization and calcification of developing enamel. May play a role in keratin cytoskeleton disassembly by recruiting CSNK1A1 to keratin filaments. Thereby, it may regulate epithelial cell migration. This is Protein FAM83H from Mus musculus (Mouse).